The primary structure comprises 315 residues: Protein FRA10AC1 homolog (315 aa).

An N-acetylmethionine modification is found at M1. Residues 1 to 28 (MHGHGGYDSDFSDDEQGGGSSKKRKKTV) form a disordered region. A phosphoserine mark is found at S9 and S12. The residue at position 36 (K36) is an N6-acetyllysine. Residues 225-235 (KEIKSTKKRSK) show a composition bias toward basic residues. Positions 225-308 (KEIKSTKKRS…EKSQEEEFDD (84 aa)) are disordered. Residues 236–245 (TKTESDESPH) show a composition bias toward basic and acidic residues. Phosphoserine occurs at positions 251 and 252. Basic and acidic residues predominate over residues 257–279 (SQGKDEGHSSSKRSEDSRNRNAG). 2 positions are modified to phosphoserine: S283 and S285.

As to quaternary structure, interacts with ESS2.

It localises to the nucleus. May be involved in pre-mRNA splicing. The protein is Protein FRA10AC1 homolog (Fra10ac1) of Rattus norvegicus (Rat).